Consider the following 304-residue polypeptide: UDP-3-O-acyl-N-acetylglucosamine deacetylase (304 aa).

Zn(2+) is bound by residues H78, H237, and D241. The Proton donor role is filled by H264.

The protein belongs to the LpxC family. The cofactor is Zn(2+).

The catalysed reaction is a UDP-3-O-[(3R)-3-hydroxyacyl]-N-acetyl-alpha-D-glucosamine + H2O = a UDP-3-O-[(3R)-3-hydroxyacyl]-alpha-D-glucosamine + acetate. It participates in glycolipid biosynthesis; lipid IV(A) biosynthesis; lipid IV(A) from (3R)-3-hydroxytetradecanoyl-[acyl-carrier-protein] and UDP-N-acetyl-alpha-D-glucosamine: step 2/6. Its function is as follows. Catalyzes the hydrolysis of UDP-3-O-myristoyl-N-acetylglucosamine to form UDP-3-O-myristoylglucosamine and acetate, the committed step in lipid A biosynthesis. The polypeptide is UDP-3-O-acyl-N-acetylglucosamine deacetylase (Polynucleobacter asymbioticus (strain DSM 18221 / CIP 109841 / QLW-P1DMWA-1) (Polynucleobacter necessarius subsp. asymbioticus)).